The sequence spans 387 residues: MSKSYLMNTYGRFNVTFDKGEGTKLYDKDGNEYIDFVSGVAVNCLGHCNPSIVKAIEEQSSKLMHVSNYYWNENAMELTEILCKNSEFDKVFMCNSGTEAIEAGLKLARKYALLHGDENKKEIIYMDNSFHGRTMGALSVTGQPKYQESFKPLIGAVKSVKFNDLDDIKQKISSKTAAVIVEPIQGEGGIIPAKKEYLKLLRDLCDENNALLIFDEVQCGMGRVGSLFAYQKFEVVPDIVCIAKALGGGFPIGAMLAKESVASSFVPGDHGNTYGGNPLACAVAIAVLKELVDKKVVEINVNEKSKYLFDKLMTLKEKYKVINDVRGMGLLIGVEVACDVKKIINKCFESKLLLITAGKNVVRFLPPLNVSFEEIDKALGIFEESIK.

Pyridoxal 5'-phosphate is bound by residues 97–98 and F130; that span reads GT. R133 provides a ligand contact to N(2)-acetyl-L-ornithine. Residue 215–218 coordinates pyridoxal 5'-phosphate; that stretch reads DEVQ. K244 is subject to N6-(pyridoxal phosphate)lysine. T273 is a pyridoxal 5'-phosphate binding site.

This sequence belongs to the class-III pyridoxal-phosphate-dependent aminotransferase family. ArgD subfamily. As to quaternary structure, homodimer. Pyridoxal 5'-phosphate is required as a cofactor.

It localises to the cytoplasm. It catalyses the reaction N(2)-acetyl-L-ornithine + 2-oxoglutarate = N-acetyl-L-glutamate 5-semialdehyde + L-glutamate. The protein operates within amino-acid biosynthesis; L-arginine biosynthesis; N(2)-acetyl-L-ornithine from L-glutamate: step 4/4. This Clostridium acetobutylicum (strain ATCC 824 / DSM 792 / JCM 1419 / IAM 19013 / LMG 5710 / NBRC 13948 / NRRL B-527 / VKM B-1787 / 2291 / W) protein is Acetylornithine aminotransferase.